The following is a 488-amino-acid chain: Long chain base biosynthesis protein 2a (488 aa).

Residues 4–24 (LPYTTALTTLFSYGLLFAFGQ) form a helical membrane-spanning segment. Lys311 is subject to N6-(pyridoxal phosphate)lysine.

The protein belongs to the class-II pyridoxal-phosphate-dependent aminotransferase family. As to quaternary structure, heterodimer with LCB1. Component of the serine palmitoyltransferase (SPT) complex, composed of LCB1 and LCB2. Pyridoxal 5'-phosphate is required as a cofactor.

It is found in the endoplasmic reticulum membrane. The enzyme catalyses L-serine + hexadecanoyl-CoA + H(+) = 3-oxosphinganine + CO2 + CoA. Its pathway is lipid metabolism; sphingolipid metabolism. Its function is as follows. Serine palmitoyltransferase (SPT). The heterodimer formed with LCB1 constitutes the catalytic core. The protein is Long chain base biosynthesis protein 2a of Oryza sativa subsp. japonica (Rice).